Consider the following 663-residue polypeptide: MGVYRIRVSTGDSKYAGSNNEVYLWLVGQHGEASLGKLLRPCRDSEAEFKVDVSEYLGPLLFVRVQKWHYLTDDAWFCNWISVKGPGDQGSEYMFPCYRWVQGRSILSLPEGTGCTVVEDSQGLFRKHREEELEERRSLYRWGNWKDGSILNVAAASISDLPVDQRFREDKRIEFEASQVIGVMDTVVNFPINTVTCWKSLDDFNCVFKSGHTKMAERVRNSWKEDAFFGYQFLNGANPMVLKRSTCLPARLVFPPGMEKLQAQLNKELQKGTLFEADFFLLDGIKANVILCSQQYLAAPLVMLKLMPDGQLLPIAIQLELPKTGSTPPPIFTPSDPPMDWLLAKCWVRSSDLQLHELQAHLLRGHLMAEVFAVATMRCLPSVHPVFKLLVPHLLYTMEINVRARSDLISERGFFDKAMSTGGGGHLDLLKQAGAFLTYCSLCPPDDLAERGLLDIETCFYAKDALRLWQIMNRYVVGMFNLHYKTDKAVQDDYELQSWCREITDIGLQGAQDRGFPTSLQSRAQACYFITMCIFTCTAQHSSVHLGQLDWFYWVPNAPCTMRLPPPTTKEATMEKLMATLPNPNQSTLQINVVWLLGRRQAVMVPLGQHSEEHFPNPEAKAVLKKFREELAALDKEIEIRNKSLDIPYEYLRPSMVENSVAI.

In terms of domain architecture, PLAT spans 2 to 115; sequence GVYRIRVSTG…ILSLPEGTGC (114 aa). The Lipoxygenase domain maps to 116-663; that stretch reads TVVEDSQGLF…PSMVENSVAI (548 aa). A Phosphoserine modification is found at Ser-149. Residues His-361, His-366, His-541, His-545, and Ile-663 each contribute to the Fe cation site.

The protein belongs to the lipoxygenase family. In terms of assembly, interacts with PEBP1; in response to IL13/interleukin-13, prevents the interaction of PEBP1 with RAF1 to activate the ERK signaling cascade. Requires Fe cation as cofactor. Detected in leukocytes, lung and aorta.

It localises to the cytoplasm. Its subcellular location is the cytosol. The protein localises to the cell membrane. The protein resides in the lipid droplet. It catalyses the reaction (5Z,8Z,11Z,14Z)-eicosatetraenoate + O2 = (12S)-hydroperoxy-(5Z,8Z,10E,14Z)-eicosatetraenoate. It carries out the reaction (5Z,8Z,11Z,14Z)-eicosatetraenoate + O2 = (15S)-hydroperoxy-(5Z,8Z,11Z,13E)-eicosatetraenoate. The enzyme catalyses (9Z,12Z)-octadecadienoate + O2 = (13S)-hydroperoxy-(9Z,11E)-octadecadienoate. The catalysed reaction is (12S)-hydroperoxy-(5Z,8Z,10E,14Z)-eicosatetraenoate = (8S)-hydroxy-(11S,12S)-epoxy-(5Z,9E,14Z)-eicosatrienoate. It catalyses the reaction (5Z,8Z,11Z,14Z)-eicosatetraenoate + 2 O2 = (14R,15S)-dihydroperoxy-(5Z,8Z,10E,12E)-eicosatetraenoate. It carries out the reaction (5Z,8Z,11Z,14Z)-eicosatetraenoate + 2 O2 = (8S,15S)-dihydroperoxy-(5Z,9E,11Z,13E)-eicosatetraenoate. The enzyme catalyses (14S,15R)-epoxy-(5Z,8Z,11Z)-eicosatrienoate + O2 = (8S)-hydroperoxy-(14S,15R)-epoxy-(5Z,9E,11Z)-eicosatrienoate. The catalysed reaction is (14S,15R)-epoxy-(5Z,8Z,11Z)-eicosatrienoate + O2 = (12S)-hydroperoxy-(14S,15R)-epoxy-(5Z,8Z,10E)-eicosatrienoate. It catalyses the reaction (14R,15S)-epoxy-(5Z,8Z,11Z)-eicosatrienoate + O2 = (5S)-hydroperoxy-(14R,15S)-epoxy-(6E,8Z,11Z)-eicosatrienoate. It carries out the reaction (14R,15S)-epoxy-(5Z,8Z,11Z)-eicosatrienoate + O2 = (12S)-hydroperoxy-(14R,15S)-epoxy-(5Z,8Z,10E)-eicosatrienoate. The enzyme catalyses (15R)-hydroperoxy-(5Z,8Z,11Z,13E)-eicosatetraenoate = 15-oxo-(5Z,8Z,11Z,13E)-eicosatetraenoate + H2O. The catalysed reaction is (15S)-hydroperoxy-(5Z,8Z,11Z,13E)-eicosatetraenoate = (14S,15S)-epoxy-(5Z,8Z,10E,12E)-eicosatetraenoate + H2O. It catalyses the reaction (4Z,7Z,10Z,13Z,16Z)-docosapentaenoate + O2 = 14-hydroperoxy-(4Z,7Z,10Z,12E,16Z)-docosapentaenoate. It carries out the reaction (7Z,10Z,13Z,16Z,19Z)-docosapentaenoate + O2 = 14-hydroperoxy-(7Z,10Z,12E,16Z,19Z)-docosapentaenoate. The enzyme catalyses (4Z,7Z,10Z,13Z,16Z,19Z)-docosahexaenoate + O2 = (14S)-hydroperoxy-(4Z,7Z,10Z,12E,16Z,19Z)-docosahexaenoate. The catalysed reaction is (4Z,7Z,10Z,13Z,16Z,19Z)-docosahexaenoate + O2 = (17S)-hydroperoxy-(4Z,7Z,10Z,13Z,15E,19Z)-docosahexaenoate. It catalyses the reaction (7S)-hydroperoxy-(4Z,8E,10Z,13Z,16Z,19Z)-docosahexaenoate + O2 = (7S,14S)-dihydroperoxy-(4Z,8E,10Z,12E,16Z,19Z)-docosahexaenoate. It carries out the reaction (7S)-hydroperoxy-(4Z,8E,10Z,13Z,16Z,19Z)-docosahexaenoate + O2 = (7S,17S)-dihydroperoxy-(4Z,8E,10Z,13Z,15E,19Z)-docosahexaenoate. The enzyme catalyses (4Z,7Z,10Z,13Z,16Z,19Z)-docosahexaenoate + O2 = (11S)-hydroperoxy-(4Z,7Z,9E,13Z,16Z,19Z)-docosahexaenoate. The catalysed reaction is N-(5Z,8Z,11Z,14Z)-eicosatetraenoyl-taurine + O2 = N-(12S)-hydroperoxy-(5Z,8Z,10E,14Z)-eicosatetraenoyl-taurine. It catalyses the reaction N-(5Z,8Z,11Z,14Z)-eicosatetraenoyl-gamma-aminobutanoate + O2 = N-(12S)-hydroperoxy-(5Z,8Z,10E,14Z)-eicosatetraenoyl-gamma-aminobutanoate. It carries out the reaction N-(5Z,8Z,11Z,14Z)-eicosatetraenoyl-glycine + O2 = N-(12S)-hydroperoxy-(5Z,8Z,10E,14Z)-eicosatetraenoyl-glycine. The enzyme catalyses N-(5Z,8Z,11Z,14Z)-eicosatetraenoyl-L-alanine + O2 = N-(12S)-hydroperoxy-(5Z,8Z,10E,14Z)-eicosatetraenoyl-alanine. The catalysed reaction is N-(5Z,8Z,11Z,14Z)-eicosatetraenoyl-taurine + O2 = N-(15S)-hydroperoxy-(5Z,8Z,11Z,13E)-eicosatetraenoyl-taurine. It catalyses the reaction N-(5Z,8Z,11Z,14Z)-eicosatetraenoyl-gamma-aminobutanoate + O2 = N-(15S)-hydroperoxy-(5Z,8Z,11Z,13E)-eicosatetraenoyl-gamma-aminobutanoate. It carries out the reaction N-(5Z,8Z,11Z,14Z)-eicosatetraenoyl-glycine + O2 = N-(15S)-hydroperoxy-(5Z,8Z,11Z,13E)-eicosatetraenoyl-glycine. The enzyme catalyses N-(5Z,8Z,11Z,14Z)-eicosatetraenoyl-L-alanine + O2 = N-(15S)-hydroperoxy-(5Z,8Z,11Z,13E)-eicosatetraenoyl-alanine. The protein operates within lipid metabolism; hydroperoxy eicosatetraenoic acid biosynthesis. Functionally, non-heme iron-containing dioxygenase that catalyzes the stereo-specific peroxidation of free and esterified polyunsaturated fatty acids generating a spectrum of bioactive lipid mediators. It inserts peroxyl groups at C12 or C15 of arachidonate ((5Z,8Z,11Z,14Z)-eicosatetraenoate) producing both 12-hydroperoxyeicosatetraenoate/12-HPETE and 15-hydroperoxyeicosatetraenoate/15-HPETE. It may then act on 12-HPETE to produce hepoxilins, which may show pro-inflammatory properties. Can also peroxidize linoleate ((9Z,12Z)-octadecadienoate) to 13-hydroperoxyoctadecadienoate. May participate in the sequential oxidations of DHA ((4Z,7Z,10Z,13Z,16Z,19Z)-docosahexaenoate) to generate specialized pro-resolving mediators (SPMs)like resolvin D5 ((7S,17S)-diHPDHA) and (7S,14S)-diHPDHA, that actively down-regulate the immune response and have anti-aggregation properties with platelets. Can convert epoxy fatty acids to hydroperoxy-epoxides derivatives followed by an intramolecular nucleophilic substitution leading to the formation of monocyclic endoperoxides. Plays an important role during the maintenance of self-tolerance by peroxidizing membrane-bound phosphatidylethanolamine which can then signal the sorting process for clearance of apoptotic cells during inflammation and prevent an autoimmune response. In addition to its role in the immune and inflammatory responses, this enzyme may play a role in epithelial wound healing in the cornea through production of lipoxin A4 (LXA(4)) and docosahexaenoic acid-derived neuroprotectin D1 (NPD1; 10R,17S-HDHA), both lipid autacoids exhibit anti-inflammatory and neuroprotective properties. Furthermore, it may regulate actin polymerization which is crucial for several biological processes such as the phagocytosis of apoptotic cells. It is also implicated in the generation of endogenous ligands for peroxisome proliferator activated receptor (PPAR-gamma), hence modulating macrophage development and function. It may also exert a negative effect on skeletal development by regulating bone mass through this pathway. As well as participates in ER stress and downstream inflammation in adipocytes, pancreatic islets, and liver. Finally, it is also involved in the cellular response to IL13/interleukin-13. This Rattus norvegicus (Rat) protein is Polyunsaturated fatty acid lipoxygenase ALOX15.